The primary structure comprises 665 residues: Translation factor guf1, mitochondrial (665 aa).

Residues 1 to 53 (MRGCLQVLRWLSTSPARRPVSSGLRLRSYEIVSPSILRPFTSTVRRQAQASRN) constitute a mitochondrion transit peptide. Positions 67–247 (ERFRNFCIVA…TVIERIPAPV (181 aa)) constitute a tr-type G domain. GTP is bound by residues 76 to 83 (AHVDHGKS), 140 to 144 (DTPGH), and 194 to 197 (NKVD).

Belongs to the TRAFAC class translation factor GTPase superfamily. Classic translation factor GTPase family. LepA subfamily.

The protein localises to the mitochondrion inner membrane. The enzyme catalyses GTP + H2O = GDP + phosphate + H(+). Promotes mitochondrial protein synthesis. May act as a fidelity factor of the translation reaction, by catalyzing a one-codon backward translocation of tRNAs on improperly translocated ribosomes. Binds to mitochondrial ribosomes in a GTP-dependent manner. In Talaromyces stipitatus (strain ATCC 10500 / CBS 375.48 / QM 6759 / NRRL 1006) (Penicillium stipitatum), this protein is Translation factor guf1, mitochondrial (guf1).